Consider the following 71-residue polypeptide: Small ribosomal subunit protein bS21B (71 aa).

Belongs to the bacterial ribosomal protein bS21 family.

In Rhizobium johnstonii (strain DSM 114642 / LMG 32736 / 3841) (Rhizobium leguminosarum bv. viciae), this protein is Small ribosomal subunit protein bS21B.